A 725-amino-acid chain; its full sequence is Sesterterpene synthase btcA (725 aa).

The segment at 1 to 333 is terpene cyclase; sequence MANPPVTEWK…CANCPRHHAW (333 aa). Mg(2+) is bound at residue Asp100. Substrate is bound by residues Asp100, Asn236, 240–244, and 329–330; these read SWGRE and RH. Residues 100–104 carry the DDXXD 1 motif; it reads DDATE. An NSE/DTE motif is present at residues 236-244; the sequence is NDYWSWGRE. The tract at residues 334-722 is prenyltransferase; sequence KEQDQAVHAV…MLYVLLQTLS (389 aa). A disordered region spans residues 352–426; sequence VEAQSPSSAT…PSSLHLLKSP (75 aa). Over residues 355 to 364 the composition is skewed to polar residues; that stretch reads QSPSSATHTA. Residues 375 to 419 are compositionally biased toward low complexity; that stretch reads APSPISSPSSSSSAKPSSSSAADSSSCTSTSQHSPSETDSTPPSS. 3 residues coordinate isopentenyl diphosphate: Lys442, Arg445, and His474. The Mg(2+) site is built by Asp481 and Asp485. A DDXXD 2 motif is present at residues 481-485; that stretch reads DDIQD. Arg490 is a dimethylallyl diphosphate binding site. Arg491 lines the isopentenyl diphosphate pocket. Dimethylallyl diphosphate is bound by residues Lys568, Thr569, Gln604, Asn611, Lys621, and Lys631.

The protein in the N-terminal section; belongs to the terpene synthase family. This sequence in the C-terminal section; belongs to the FPP/GGPP synthase family. In terms of assembly, hexamer. The cofactor is Mg(2+).

The enzyme catalyses isopentenyl diphosphate + (2E,6E)-farnesyl diphosphate = (2E,6E,10E)-geranylgeranyl diphosphate + diphosphate. It carries out the reaction isopentenyl diphosphate + (2E,6E,10E)-geranylgeranyl diphosphate = (2E,6E,10E,14E)-geranylfarnesyl diphosphate + diphosphate. The protein operates within secondary metabolite biosynthesis; terpenoid biosynthesis. In terms of biological role, bifunctional terpene synthase; part of the gene cluster that mediates the biosynthesis of betaestacins. The bifunctional terpene synthase btcA converts isopentenyl diphosphate (IPP) and dimethylallyl diphosphate (DMAPP) into the sesterterpene betaestacin I. The C-terminal prenyltransferase (PT) domain of btcA catalyzes formation of GFPP, whereas the N-terminal terpene cyclase (TC) domain catalyzes the cyclization of GFPP into betaestacin I. The cytochrome P450 monooxygenase btcB is then responsible for the six-step oxidation of betaestacin I to yield betaestacin II. The roles of the cytochrome P450 monooxygenase btcC and the alpha-ketoglutarate-dependent dioxygenase btcD have not been identified yet. This chain is Sesterterpene synthase btcA, found in Neocamarosporium betae (Beet black rot fungus).